A 433-amino-acid polypeptide reads, in one-letter code: tRNA(Ile2) 2-agmatinylcytidine synthetase TiaS (433 aa).

It belongs to the TiaS family.

Its subcellular location is the cytoplasm. The catalysed reaction is cytidine(34) in tRNA(Ile2) + agmatine + ATP + H2O = 2-agmatinylcytidine(34) in tRNA(Ile2) + AMP + 2 phosphate + 2 H(+). ATP-dependent agmatine transferase that catalyzes the formation of 2-agmatinylcytidine (agm2C) at the wobble position (C34) of tRNA(Ile2), converting the codon specificity from AUG to AUA. This chain is tRNA(Ile2) 2-agmatinylcytidine synthetase TiaS, found in Methanopyrus kandleri (strain AV19 / DSM 6324 / JCM 9639 / NBRC 100938).